A 70-amino-acid chain; its full sequence is MPEWRTCSFCGYEIEPGKGKMVVEKDGTVLYFCSSKCEKSYRMGRNPRKLKWTKVYQDMKAELKKAQESQ.

Residues Cys7, Cys10, Cys33, and Cys37 each coordinate Zn(2+). The segment at 7–37 adopts a C4-type zinc-finger fold; it reads CSFCGYEIEPGKGKMVVEKDGTVLYFCSSKC.

Belongs to the eukaryotic ribosomal protein eL24 family. Part of the 50S ribosomal subunit. Forms a cluster with proteins L3 and L14. It depends on Zn(2+) as a cofactor.

Functionally, binds to the 23S rRNA. The polypeptide is Large ribosomal subunit protein eL24 (Methanocaldococcus jannaschii (strain ATCC 43067 / DSM 2661 / JAL-1 / JCM 10045 / NBRC 100440) (Methanococcus jannaschii)).